Consider the following 282-residue polypeptide: 3-methyl-2-oxobutanoate hydroxymethyltransferase (282 aa).

Positions 44 and 83 each coordinate Mg(2+). 3-methyl-2-oxobutanoate contacts are provided by residues 44–45 (DS), Asp-83, and Lys-112. Glu-114 is a binding site for Mg(2+). Catalysis depends on Glu-181, which acts as the Proton acceptor.

The protein belongs to the PanB family. In terms of assembly, homodecamer; pentamer of dimers. Requires Mg(2+) as cofactor.

It localises to the cytoplasm. The catalysed reaction is 3-methyl-2-oxobutanoate + (6R)-5,10-methylene-5,6,7,8-tetrahydrofolate + H2O = 2-dehydropantoate + (6S)-5,6,7,8-tetrahydrofolate. The protein operates within cofactor biosynthesis; coenzyme A biosynthesis. Catalyzes the reversible reaction in which hydroxymethyl group from 5,10-methylenetetrahydrofolate is transferred onto alpha-ketoisovalerate to form ketopantoate. This Pyrococcus abyssi (strain GE5 / Orsay) protein is 3-methyl-2-oxobutanoate hydroxymethyltransferase.